The primary structure comprises 2555 residues: Plipastatin synthase subunit C (2555 aa).

A condensation 1 region spans residues 7–306 (IQDIYPLSFM…NTIPIRAQSD (300 aa)). Positions 491–894 (TYAELDMYAS…SIEGVREAAV (404 aa)) are adenylation 1. The 76-residue stretch at 967 to 1042 (APRNVTEMKL…GLATVIREGT (76 aa)) folds into the Carrier 1 domain. Residue Ser-1002 is modified to O-(pantetheine 4'-phosphoryl)serine. The tract at residues 1054–1344 (KQETYPVSSA…NTLALRTRPE (291 aa)) is condensation 2. The segment at 1532-1927 (TYEDLNSWAN…QIDGVKEAAV (396 aa)) is adenylation 2. Positions 2003 to 2077 (PPRNELEEQL…DLSPFIRKSE (75 aa)) constitute a Carrier 2 domain. Ser-2038 is subject to O-(pantetheine 4'-phosphoryl)serine. An epimerization 3 region spans residues 2085–2548 (IQGDVPWTPV…SLTAEDLDSI (464 aa)).

This sequence belongs to the ATP-dependent AMP-binding enzyme family. Requires pantetheine 4'-phosphate as cofactor.

In terms of biological role, this protein is a multifunctional enzyme, able to activate and polymerize the amino acids Glu and Ala/Val as part of the biosynthesis of the lipopeptide antibiotic plipastatin. The Ala/Val residue is further epimerized to the D-isomer form. The activation sites for these amino acids consist of individual domains. This Bacillus subtilis (strain 168) protein is Plipastatin synthase subunit C (ppsC).